We begin with the raw amino-acid sequence, 280 residues long: Octanoyltransferase LIP2p2, chloroplastic (280 aa).

The transit peptide at 1–34 (MVFSVATSSVTNPKLHHHHHLSDFNRNRVSTSLK) directs the protein to the chloroplast. The BPL/LPL catalytic domain maps to 81 to 270 (QECSDSLIIL…EFSEVFQLQM (190 aa)). Substrate-binding positions include 123-130 (RGGEVTYH), 191-193 (AIG), and 204-206 (GLA). The active-site Acyl-thioester intermediate is Cys-222.

Belongs to the LipB family. In terms of tissue distribution, expressed in roots, leaves, cauline leaves, stems, siliques and flowers.

It localises to the plastid. The protein resides in the chloroplast. The catalysed reaction is octanoyl-[ACP] + L-lysyl-[protein] = N(6)-octanoyl-L-lysyl-[protein] + holo-[ACP] + H(+). It participates in protein modification; protein lipoylation via endogenous pathway; protein N(6)-(lipoyl)lysine from octanoyl-[acyl-carrier-protein]: step 1/2. In terms of biological role, catalyzes the transfer of endogenously produced octanoic acid from octanoyl-acyl-carrier-protein onto the lipoyl domains of lipoate-dependent enzymes. Lipoyl-ACP can also act as a substrate although octanoyl-ACP is likely to be the physiological substrate. Together with LIP1P is essential for de novo plastidial protein lipoylation during seed development. Acts redundantly with LIP2P. This chain is Octanoyltransferase LIP2p2, chloroplastic, found in Arabidopsis thaliana (Mouse-ear cress).